The chain runs to 411 residues: MRRRRAGGRTMVERASKFVLVVAGSACFMLILYQYAGPGLSLGAPGGRVPPDDLDLFPTPDPHYEKKYYFPVRELERSLRFDMKGDDVIVFLHIQKTGGTTFGRHLVQNVRLEVPCDCRPGQKKCTCYRPNRRETWLFSRFSTGWSCGLHADWTELTNCVPGVLDRRDPAGLRSPRKFYYITLLRDPVSRYLSEWRHVQRGATWKTSLHMCDGRTPTPEELPPCYEGTDWSGCTLQEFMDCPYNLANNRQVRMLADLSLVGCYNLSFIPESKRAQLLLESAKKNLRGMAFFGLTEFQRKTQYLFERTFNLKFIRPFMQYNSTRAGGVEVDEDTIRHIEELNDLDMQLYDYAKDLFQQRYQYKRQLERREQRLRNREERLLHRSKEALPREDPEEPGRVPTEDYMSHIIEKW.

The Cytoplasmic segment spans residues 1-19; sequence MRRRRAGGRTMVERASKFV. Residues 20-37 traverse the membrane as a helical; Signal-anchor for type II membrane protein segment; the sequence is LVVAGSACFMLILYQYAG. Residues 38-411 lie on the Lumenal side of the membrane; it reads PGLSLGAPGG…DYMSHIIEKW (374 aa). 93–101 lines the 3'-phosphoadenylyl sulfate pocket; that stretch reads HIQKTGGTT. Residues 123-124, arginine 140, tryptophan 145, and histidine 150 each bind substrate; that span reads KK. Histidine 150 serves as the catalytic Proton acceptor. 2 residues coordinate 3'-phosphoadenylyl sulfate: arginine 185 and serine 193. Substrate contacts are provided by histidine 197 and tryptophan 204. A glycan (N-linked (GlcNAc...) asparagine) is linked at asparagine 264. 317–319 contributes to the 3'-phosphoadenylyl sulfate binding site; it reads MQY. The N-linked (GlcNAc...) asparagine glycan is linked to asparagine 320. 323–324 contacts 3'-phosphoadenylyl sulfate; that stretch reads RA. Positions 352 to 386 form a coiled coil; it reads KDLFQQRYQYKRQLERREQRLRNREERLLHRSKEA. The segment at 380 to 401 is disordered; sequence LHRSKEALPREDPEEPGRVPTE.

Belongs to the sulfotransferase 6 family. In terms of processing, N-glycosylated. Expressed in fetal brain and liver.

It localises to the membrane. It carries out the reaction alpha-D-glucosaminyl-[heparan sulfate](n) + 3'-phosphoadenylyl sulfate = 6-sulfo-alpha-D-glucosaminyl-[heparan sulfate](n) + adenosine 3',5'-bisphosphate + H(+). Its function is as follows. 6-O-sulfation enzyme which catalyzes the transfer of sulfate from 3'-phosphoadenosine 5'-phosphosulfate (PAPS) to position 6 of the N-sulfoglucosamine residue (GlcNS) of heparan sulfate. Critical for normal neuronal development where it may play a role in neuron branching. May also play a role in limb development. May prefer iduronic acid. The sequence is that of Heparan-sulfate 6-O-sulfotransferase 1 from Mus musculus (Mouse).